Reading from the N-terminus, the 90-residue chain is Probable Fe(2+)-trafficking protein (90 aa).

The protein belongs to the Fe(2+)-trafficking protein family.

Its function is as follows. Could be a mediator in iron transactions between iron acquisition and iron-requiring processes, such as synthesis and/or repair of Fe-S clusters in biosynthetic enzymes. The chain is Probable Fe(2+)-trafficking protein from Actinobacillus succinogenes (strain ATCC 55618 / DSM 22257 / CCUG 43843 / 130Z).